A 269-amino-acid chain; its full sequence is Phosphatidylglycerol--prolipoprotein diacylglyceryl transferase (269 aa).

7 helical membrane-spanning segments follow: residues 17–37 (IGPIAIRWYALAYIAGLMLGW), 59–79 (FLVWATMGVVLGGRLGYVLFY), 95–115 (WQGGMSFHGGALGVIVGIIAF), 123–143 (LFQVGDVICCAVPIGLFFGRI), 181–201 (AGLEGAVLFLVLFGLWRLTGI), 206–226 (GALSGVFLAGYGLARIASEFF), and 242–262 (MGQLLSIPQVLVGLALLAWAL). Residue Arg-142 participates in a 1,2-diacyl-sn-glycero-3-phospho-(1'-sn-glycerol) binding.

The protein belongs to the Lgt family.

It localises to the cell inner membrane. It catalyses the reaction L-cysteinyl-[prolipoprotein] + a 1,2-diacyl-sn-glycero-3-phospho-(1'-sn-glycerol) = an S-1,2-diacyl-sn-glyceryl-L-cysteinyl-[prolipoprotein] + sn-glycerol 1-phosphate + H(+). It participates in protein modification; lipoprotein biosynthesis (diacylglyceryl transfer). In terms of biological role, catalyzes the transfer of the diacylglyceryl group from phosphatidylglycerol to the sulfhydryl group of the N-terminal cysteine of a prolipoprotein, the first step in the formation of mature lipoproteins. The sequence is that of Phosphatidylglycerol--prolipoprotein diacylglyceryl transferase from Paramagnetospirillum magneticum (strain ATCC 700264 / AMB-1) (Magnetospirillum magneticum).